The following is a 167-amino-acid chain: Large ribosomal subunit protein uL10 (167 aa).

The protein belongs to the universal ribosomal protein uL10 family. Part of the ribosomal stalk of the 50S ribosomal subunit. The N-terminus interacts with L11 and the large rRNA to form the base of the stalk. The C-terminus forms an elongated spine to which L12 dimers bind in a sequential fashion forming a multimeric L10(L12)X complex.

Its function is as follows. Forms part of the ribosomal stalk, playing a central role in the interaction of the ribosome with GTP-bound translation factors. In Streptococcus thermophilus (strain CNRZ 1066), this protein is Large ribosomal subunit protein uL10.